Consider the following 349-residue polypeptide: Glycerol-3-phosphate dehydrogenase [NAD(+)], cytoplasmic (349 aa).

NAD(+) is bound by residues 10 to 15, F41, and F97; that span reads GSGNWG. K120 contacts substrate. Residue A153 participates in NAD(+) binding. The residue at position 154 (S154) is a Phosphoserine. K204 functions as the Proton acceptor in the catalytic mechanism. Residue R269 coordinates NAD(+). Substrate is bound at residue 269–270; sequence RN. At K289 the chain carries N6-succinyllysine. NAD(+) contacts are provided by K296 and Q298. A Phosphotyrosine modification is found at Y326.

This sequence belongs to the NAD-dependent glycerol-3-phosphate dehydrogenase family. In terms of assembly, homodimer. Expressed in liver (at protein level).

It is found in the cytoplasm. The catalysed reaction is sn-glycerol 3-phosphate + NAD(+) = dihydroxyacetone phosphate + NADH + H(+). With respect to regulation, inhibited by zinc ions and sulfate. Functionally, has glycerol-3-phosphate dehydrogenase activity. This chain is Glycerol-3-phosphate dehydrogenase [NAD(+)], cytoplasmic, found in Homo sapiens (Human).